Here is a 65-residue protein sequence, read N- to C-terminus: Large ribosomal subunit protein bL28 (65 aa).

Belongs to the bacterial ribosomal protein bL28 family.

This is Large ribosomal subunit protein bL28 from Bifidobacterium animalis subsp. lactis (strain AD011).